We begin with the raw amino-acid sequence, 533 residues long: Putative amidase C550.07 (533 aa).

Catalysis depends on charge relay system residues Lys-132 and Ser-207. The active-site Acyl-ester intermediate is Ser-231.

The protein belongs to the amidase family.

The protein resides in the cytoplasm. It is found in the nucleus. It catalyses the reaction a monocarboxylic acid amide + H2O = a monocarboxylate + NH4(+). This chain is Putative amidase C550.07, found in Schizosaccharomyces pombe (strain 972 / ATCC 24843) (Fission yeast).